A 126-amino-acid chain; its full sequence is Holo-[acyl-carrier-protein] synthase (126 aa).

Mg(2+) is bound by residues Asp9 and Glu58.

Belongs to the P-Pant transferase superfamily. AcpS family. Mg(2+) serves as cofactor.

The protein localises to the cytoplasm. The enzyme catalyses apo-[ACP] + CoA = holo-[ACP] + adenosine 3',5'-bisphosphate + H(+). Functionally, transfers the 4'-phosphopantetheine moiety from coenzyme A to a Ser of acyl-carrier-protein. The sequence is that of Holo-[acyl-carrier-protein] synthase from Serratia proteamaculans (strain 568).